The following is a 130-amino-acid chain: Small ribosomal subunit protein uS11 (130 aa).

This sequence belongs to the universal ribosomal protein uS11 family. In terms of assembly, part of the 30S ribosomal subunit. Interacts with proteins S7 and S18. Binds to IF-3.

Located on the platform of the 30S subunit, it bridges several disparate RNA helices of the 16S rRNA. Forms part of the Shine-Dalgarno cleft in the 70S ribosome. The chain is Small ribosomal subunit protein uS11 from Parasynechococcus marenigrum (strain WH8102).